We begin with the raw amino-acid sequence, 287 residues long: Cell wall-binding protein YocH (287 aa).

The N-terminal stretch at 1–25 (MKKTIMSFVAVAALSTTAFGAHASA) is a signal peptide. 2 consecutive LysM domains span residues 26 to 69 (KEIT…KLTI) and 78 to 121 (GQYT…TLSV). A compositionally biased stretch (low complexity) spans 130 to 143 (TATENAQTNAPQAA). The tract at residues 130 to 193 (TATENAQTNA…SNTNNQEASK (64 aa)) is disordered. Over residues 165 to 181 (QETKAEAETSVNTEEKA) the composition is skewed to basic and acidic residues. Residues 182–193 (VQSNTNNQEASK) show a composition bias toward polar residues.

It localises to the secreted. The protein localises to the cell wall. In Bacillus subtilis (strain 168), this protein is Cell wall-binding protein YocH (yocH).